The primary structure comprises 346 residues: Histone PARylation factor 1 (346 aa).

Met-1 is subject to N-acetylmethionine. A compositionally biased stretch (basic residues) spans 1–10; that stretch reads MVGGGAKRRL. The segment at 1–29 is disordered; sequence MVGGGAKRRLRGEGPQCEKPVDMKKSKSC. The residue at position 19 (Lys-19) is an N6-acetyllysine. A compositionally biased stretch (basic and acidic residues) spans 19 to 29; the sequence is KPVDMKKSKSC. Ser-97 carries the post-translational modification ADP-ribosylserine. 2 positions are modified to N6-acetyllysine: Lys-186 and Lys-233. Asp-235 carries the polyADP-ribosyl aspartic acid modification. Tyr-238 carries the post-translational modification ADP-ribosyltyrosine. A PolyADP-ribosyl glutamic acid modification is found at Glu-240. The interaction with PARP1 stretch occupies residues 242–346; sequence PETDASLRRI…SQDDVDQLAA (105 aa). The active-site Proton donor is Glu-284.

The protein belongs to the HPF1 family. In terms of assembly, interacts with PARP1 (via the PARP catalytic domain). Interacts with PARP2 (via the PARP catalytic domain). Interacts with core nucleosomes in a PARP1- and PARP2-dependent manner.

It is found in the chromosome. It localises to the nucleus. Cofactor for serine ADP-ribosylation that confers serine specificity on PARP1 and PARP2 and plays a key role in DNA damage response. Initiates the repair of double-strand DNA breaks: recruited to DNA damage sites by PARP1 and PARP2 and switches the amino acid specificity of PARP1 and PARP2 from aspartate or glutamate to serine residues, licensing serine ADP-ribosylation of target proteins. Serine ADP-ribosylation of target proteins, such as histones, promotes decompaction of chromatin and the recruitment of repair factors leading to the reparation of DNA strand breaks. Serine ADP-ribosylation of proteins constitutes the primary form of ADP-ribosylation of proteins in response to DNA damage. HPF1 acts by completing the active site of PARP1 and PARP2: forms a composite active site composed of residues from HPF1 and PARP1 or PARP2. While HPF1 promotes the initiation of serine ADP-ribosylation, it restricts the polymerase activity of PARP1 and PARP2 in order to limit the length of poly-ADP-ribose chains. HPF1 also promotes tyrosine ADP-ribosylation, probably by conferring tyrosine specificity on PARP1. This Bos taurus (Bovine) protein is Histone PARylation factor 1.